The following is a 182-amino-acid chain: Prorelaxin (182 aa).

The first 24 residues, Met1–Gly24, serve as a signal peptide directing secretion. Gln25 carries the post-translational modification Pyrrolidone carboxylic acid. Intrachain disulfides connect Cys34-Cys169, Cys46-Cys182, and Cys168-Cys173. A propeptide spans Ser57–Ser154 (connecting peptide). The propeptide occupies Leu159 to Phe160.

The protein belongs to the insulin family. Heterodimer of a B chain and an A chain linked by two disulfide bonds.

Its subcellular location is the secreted. Its function is as follows. Relaxin is an ovarian hormone that acts with estrogen to produce dilatation of the birth canal in many mammals. This is Prorelaxin (RLN) from Sus scrofa (Pig).